The chain runs to 918 residues: NEDD4-like E3 ubiquitin-protein ligase WWP1 (918 aa).

One can recognise a C2 domain in the interval 1-116 (MATASPRSDT…THNRKLEKVK (116 aa)). Composition is skewed to polar residues over residues 150 to 164 (TNRS…QQNG), 209 to 219 (NGENTPSSPSQ), and 235 to 258 (SAPT…STMG). 2 disordered regions span residues 150–182 (TNRS…PRLP) and 209–360 (NGEN…PHGR). Residues 266–281 (TTSTSNCTSTTTQEPP) are compositionally biased toward low complexity. 4 WW domains span residues 345 to 378 (EALP…RPQP), 377 to 410 (QPLP…RPTM), 452 to 485 (GPLP…DPRT), and 492 to 525 (EPLP…DPRN). The interaction with ERBB4 stretch occupies residues 345-525 (EALPSGWEQR…RTTTFKDPRN (181 aa)). The segment at 345-527 (EALPSGWEQR…TTFKDPRNGK (183 aa)) is required for interaction with and ubiquitination of AMOTL2. Required for interaction with YAP1. Positions 584–918 (KPYDLRRRLY…IEETEGFGQE (335 aa)) constitute an HECT domain. Catalysis depends on Cys886, which acts as the Glycyl thioester intermediate.

Interacts with the Crumbs complex components PALS1 and PATJ; interaction with the Crumbs complex is enhanced by WWP1's interaction with AMOTL2 and facilitates WWP1 localization to the plasma membrane. Interaction with the Crumbs complex promotes WWP1 monoubiquitination of AMOTL2, which activates the Hippo signaling pathway. Binds SCNN1A, SCNN1B, SCNN1G, WBP1, WBP2, DRPLA and adenovirus type 2 PIII. Interacts with TGIF. Binds KLF2 AND HIVEP3. Interacts with RNF11. Interacts with SPART. Interacts with NDFIP1 and NDFIP2; this interaction activates the E3 ubiquitin-protein ligase. Interacts with ERBB4 isoforms JM-B CYT-1 and JM-A CYT-1. Does not interact with ERB4 isoform JMA-A CYT-2. Interacts with SMAD1, SMAD2, SMAD3, SMAD5, SMAD6, SMAD7, TGFBR1 and TGFBR2. Associates with the TGFBR1:TGFBR2 receptor complex in presence of SMAD7. Interacts with SKIL isoform 1. Interacts with TP63 isoform 1 and isoform 2. Interacts (via WW domains) with ARRDC1, ARRDC2 and ARRDC3. Auto-ubiquitinated and ubiquitinated by RNF11.

It localises to the cytoplasm. The protein resides in the cell membrane. The protein localises to the nucleus. Its subcellular location is the cell junction. The catalysed reaction is S-ubiquitinyl-[E2 ubiquitin-conjugating enzyme]-L-cysteine + [acceptor protein]-L-lysine = [E2 ubiquitin-conjugating enzyme]-L-cysteine + N(6)-ubiquitinyl-[acceptor protein]-L-lysine.. The protein operates within protein modification; protein ubiquitination. Its activity is regulated as follows. Activated by NDFIP1- and NDFIP2-binding. E3 ubiquitin-protein ligase which accepts ubiquitin from an E2 ubiquitin-conjugating enzyme in the form of a thioester and then directly transfers the ubiquitin to targeted substrates. Ubiquitinates and promotes degradation of SMAD2 in response to TGF-beta signaling, which requires interaction with TGIF. Ubiquitinates ERBB4 isoforms JM-A CYT-1 and JM-B CYT-1, KLF2, KLF5 and TP63 and promotes their proteasomal degradation. Ubiquitinates RNF11 without targeting it for degradation. Ubiquitinates and promotes degradation of TGFBR1; the ubiquitination is enhanced by SMAD7. Ubiquitinates SMAD6 and SMAD7. Activates the Hippo signaling pathway in response to cell contact inhibition and recruitment to the Crumbs complex at the cell membrane. Monoubiquitinates AMOTL2 which facilitates its interaction with and activation of LATS2. LATS2 then phosphorylates YAP1, excluding it from the nucleus and therefore ultimately represses YAP1-driven transcription of target genes. In Mus musculus (Mouse), this protein is NEDD4-like E3 ubiquitin-protein ligase WWP1 (Wwp1).